Reading from the N-terminus, the 431-residue chain is Adenylosuccinate synthetase (431 aa).

GTP-binding positions include 12–18 and 40–42; these read GDEGKGK and GHT. Asp-13 acts as the Proton acceptor in catalysis. Mg(2+) is bound by residues Asp-13 and Gly-40. Residues 13-16, 38-41, Thr-129, Arg-143, Gln-224, Thr-239, and Arg-303 contribute to the IMP site; these read DEGK and NAGH. His-41 acts as the Proton donor in catalysis. Residue 299–305 participates in substrate binding; sequence VTTGRAR. GTP is bound by residues Arg-305, 331–333, and 413–415; these read KLD and GVG.

Belongs to the adenylosuccinate synthetase family. Homodimer. Mg(2+) serves as cofactor.

It is found in the cytoplasm. The enzyme catalyses IMP + L-aspartate + GTP = N(6)-(1,2-dicarboxyethyl)-AMP + GDP + phosphate + 2 H(+). The protein operates within purine metabolism; AMP biosynthesis via de novo pathway; AMP from IMP: step 1/2. In terms of biological role, plays an important role in the de novo pathway of purine nucleotide biosynthesis. Catalyzes the first committed step in the biosynthesis of AMP from IMP. This Mycolicibacterium vanbaalenii (strain DSM 7251 / JCM 13017 / BCRC 16820 / KCTC 9966 / NRRL B-24157 / PYR-1) (Mycobacterium vanbaalenii) protein is Adenylosuccinate synthetase.